Consider the following 493-residue polypeptide: Alcohol-forming fatty acyl-CoA reductase (493 aa).

It belongs to the fatty acyl-CoA reductase family.

It catalyses the reaction a long-chain fatty acyl-CoA + 2 NADPH + 2 H(+) = a long-chain primary fatty alcohol + 2 NADP(+) + CoA. NADPH-dependent alcohol-forming fatty acyl-coenzyme A reductase that catalyzes the reduction of fatty acyl-CoA to fatty alcohols. The recombinant enzyme accepts saturated and mono-unsaturated fatty acyl-CoAs of 16 to 22 carbons. The chain is Alcohol-forming fatty acyl-CoA reductase from Simmondsia chinensis (Jojoba).